Reading from the N-terminus, the 49-residue chain is Large ribosomal subunit protein bL33 (49 aa).

This sequence belongs to the bacterial ribosomal protein bL33 family.

The polypeptide is Large ribosomal subunit protein bL33 (Streptococcus pyogenes serotype M18 (strain MGAS8232)).